We begin with the raw amino-acid sequence, 892 residues long: DNA mismatch repair protein MutS (892 aa).

607–614 (GPNMSGKS) is a binding site for ATP.

Belongs to the DNA mismatch repair MutS family.

In terms of biological role, this protein is involved in the repair of mismatches in DNA. It is possible that it carries out the mismatch recognition step. This protein has a weak ATPase activity. This chain is DNA mismatch repair protein MutS, found in Bacillus cereus (strain AH820).